The chain runs to 357 residues: Heat-inducible transcription repressor HrcA (357 aa).

The protein belongs to the HrcA family.

Its function is as follows. Negative regulator of class I heat shock genes (grpE-dnaK-dnaJ and groELS operons). Prevents heat-shock induction of these operons. The sequence is that of Heat-inducible transcription repressor HrcA from Chlorobium phaeobacteroides (strain DSM 266 / SMG 266 / 2430).